Consider the following 131-residue polypeptide: Fluoride-specific ion channel FluC (131 aa).

Helical transmembrane passes span 4-24 (LWIM…TGFV), 30-50 (GIFP…IGFF), 68-88 (LFVM…SLQT), and 104-124 (IALS…VAVA). Na(+) is bound by residues G76 and T79.

The protein belongs to the fluoride channel Fluc/FEX (TC 1.A.43) family.

Its subcellular location is the cell inner membrane. It carries out the reaction fluoride(in) = fluoride(out). With respect to regulation, na(+) is not transported, but it plays an essential structural role and its presence is essential for fluoride channel function. Its function is as follows. Fluoride-specific ion channel. Important for reducing fluoride concentration in the cell, thus reducing its toxicity. This is Fluoride-specific ion channel FluC from Methylocella silvestris (strain DSM 15510 / CIP 108128 / LMG 27833 / NCIMB 13906 / BL2).